The primary structure comprises 181 residues: 3-hydroxyacyl-[acyl-carrier-protein] dehydratase FabZ (181 aa).

Histidine 54 is a catalytic residue.

This sequence belongs to the thioester dehydratase family. FabZ subfamily.

The protein localises to the cytoplasm. The enzyme catalyses a (3R)-hydroxyacyl-[ACP] = a (2E)-enoyl-[ACP] + H2O. Involved in unsaturated fatty acids biosynthesis. Catalyzes the dehydration of short chain beta-hydroxyacyl-ACPs and long chain saturated and unsaturated beta-hydroxyacyl-ACPs. This is 3-hydroxyacyl-[acyl-carrier-protein] dehydratase FabZ from Yersinia pestis.